The chain runs to 620 residues: 1-deoxy-D-xylulose-5-phosphate synthase (620 aa).

Residues histidine 75 and 116–118 contribute to the thiamine diphosphate site; that span reads AHS. Aspartate 147 provides a ligand contact to Mg(2+). Residues 148–149, asparagine 177, tyrosine 284, and glutamate 366 each bind thiamine diphosphate; that span reads GA. Asparagine 177 contacts Mg(2+).

It belongs to the transketolase family. DXPS subfamily. As to quaternary structure, homodimer. Mg(2+) serves as cofactor. The cofactor is thiamine diphosphate.

It carries out the reaction D-glyceraldehyde 3-phosphate + pyruvate + H(+) = 1-deoxy-D-xylulose 5-phosphate + CO2. It functions in the pathway metabolic intermediate biosynthesis; 1-deoxy-D-xylulose 5-phosphate biosynthesis; 1-deoxy-D-xylulose 5-phosphate from D-glyceraldehyde 3-phosphate and pyruvate: step 1/1. Functionally, catalyzes the acyloin condensation reaction between C atoms 2 and 3 of pyruvate and glyceraldehyde 3-phosphate to yield 1-deoxy-D-xylulose-5-phosphate (DXP). The chain is 1-deoxy-D-xylulose-5-phosphate synthase from Bordetella bronchiseptica (strain ATCC BAA-588 / NCTC 13252 / RB50) (Alcaligenes bronchisepticus).